The following is a 127-amino-acid chain: Ycf91-like protein (127 aa).

It belongs to the ycf91 family.

This Nostoc sp. (strain PCC 7120 / SAG 25.82 / UTEX 2576) protein is Ycf91-like protein.